The chain runs to 624 residues: Basal cell adhesion molecule (624 aa).

The signal sequence occupies residues 1–25 (MEPPDARAGLLWLTLLLSGYSGAQA). Ig-like V-type domains lie at 26–136 (ELHV…SSVR) and 141–251 (PEAT…HTFR). The Extracellular portion of the chain corresponds to 26–543 (ELHVSVPPRV…GSVAPQTAQA (518 aa)). 3 disulfide bridges follow: Cys47/Cys119, Cys166/Cys231, and Cys285/Cys331. 3 consecutive Ig-like C2-type domains span residues 268 to 343 (PSTT…EEVQ), 357 to 436 (PLEL…QSFQ), and 443 to 534 (PELK…FHFG). N-linked (GlcNAc...) asparagine glycosylation is found at Asn315, Asn371, and Asn378. 2 disulfides stabilise this stretch: Cys379–Cys419 and Cys468–Cys518. The disordered stretch occupies residues 477–497 (KLTWSQRGDTTPAEPPFEGRG). Residues 544–564 (GVAVMAVAVSVGLLLLVVAAF) form a helical membrane-spanning segment. The Cytoplasmic segment spans residues 565–624 (YCMRRKGRPGCCQRAEKGAPPAREPELSHSGSERPEHTGLLMGGPSGGGRGGNGGFGDEC). The disordered stretch occupies residues 574–624 (GCCQRAEKGAPPAREPELSHSGSERPEHTGLLMGGPSGGGRGGNGGFGDEC). Basic and acidic residues predominate over residues 587–601 (REPELSHSGSERPEH). Phosphoserine occurs at positions 592, 594, and 596. Positions 605 to 624 (LMGGPSGGGRGGNGGFGDEC) are enriched in gly residues.

Homodimer. Interacts with ITGA4:ITGB1. Interacts with spectrins SPTA1 and SPTB1.

The protein localises to the cell membrane. Transmembrane glycoprotein that functions as both a receptor and an adhesion molecule playing a crucial role in cell adhesion, motility, migration and invasion. Extracellular domain enables binding to extracellular matrix proteins, such as laminin, integrin and other ligands while its intracellular domain interacts with cytoskeletal proteins like hemoglobin, facilitating cell signal transduction. Serves as a receptor for laminin alpha-5/LAMA5 to promote cell adhesion. Mechanistically, JAK2 induces BCAM phosphorylation and activates its adhesion to laminin by stimulating a Rap1/AKT signaling pathway in the absence of EPOR. This chain is Basal cell adhesion molecule (Bcam), found in Rattus norvegicus (Rat).